Consider the following 165-residue polypeptide: Peptide methionine sulfoxide reductase MsrA (165 aa).

Residue cysteine 10 is part of the active site.

The protein belongs to the MsrA Met sulfoxide reductase family.

The catalysed reaction is L-methionyl-[protein] + [thioredoxin]-disulfide + H2O = L-methionyl-(S)-S-oxide-[protein] + [thioredoxin]-dithiol. It carries out the reaction [thioredoxin]-disulfide + L-methionine + H2O = L-methionine (S)-S-oxide + [thioredoxin]-dithiol. Its function is as follows. Has an important function as a repair enzyme for proteins that have been inactivated by oxidation. Catalyzes the reversible oxidation-reduction of methionine sulfoxide in proteins to methionine. The protein is Peptide methionine sulfoxide reductase MsrA of Campylobacter jejuni (strain RM1221).